A 290-amino-acid chain; its full sequence is Probable prolyl 4-hydroxylase 8 (290 aa).

Residues 1-19 (MAKKPKQLRNKPRKSFSTQ) are Cytoplasmic-facing. A helical; Signal-anchor for type II membrane protein membrane pass occupies residues 20-40 (TFTVVVLVLFVILILVGLGIF). Topologically, residues 41–290 (SLPSTNKTSS…TKWFHVHEYN (250 aa)) are lumenal. The N-linked (GlcNAc...) asparagine glycan is linked to Asn46. A Fe2OG dioxygenase domain is found at 163–286 (NGEGLQVLHY…KWSSTKWFHV (124 aa)). The Fe cation site is built by His181 and Asp183. An N-linked (GlcNAc...) asparagine glycan is attached at Asn222. Position 267 (His267) interacts with Fe cation. A 2-oxoglutarate-binding site is contributed by Lys277.

This sequence belongs to the P4HA family. Fe(2+) is required as a cofactor. L-ascorbate serves as cofactor.

The protein localises to the endoplasmic reticulum membrane. The enzyme catalyses L-prolyl-[collagen] + 2-oxoglutarate + O2 = trans-4-hydroxy-L-prolyl-[collagen] + succinate + CO2. Functionally, catalyzes the post-translational formation of 4-hydroxyproline in -Xaa-Pro-Gly- sequences in proline-rich peptide sequences of plant glycoproteins and other proteins. Hydroxyprolines are important constituent of many plant cell wall glycoproteins such as extensins, hydroxyproline-rich glycoproteins, lectins and arabinogalactan proteins. The chain is Probable prolyl 4-hydroxylase 8 from Arabidopsis thaliana (Mouse-ear cress).